The primary structure comprises 303 residues: tRNA pseudouridine synthase B (303 aa).

Asp53 acts as the Nucleophile in catalysis.

Belongs to the pseudouridine synthase TruB family. Type 1 subfamily.

It carries out the reaction uridine(55) in tRNA = pseudouridine(55) in tRNA. Its function is as follows. Responsible for synthesis of pseudouridine from uracil-55 in the psi GC loop of transfer RNAs. The chain is tRNA pseudouridine synthase B from Zymomonas mobilis subsp. mobilis (strain ATCC 31821 / ZM4 / CP4).